The primary structure comprises 1059 residues: Disks large-associated protein 2 (1059 aa).

2 disordered regions span residues 31–56 (GEPEEEEGGDLAQPGLSFPGPAEEDI) and 244–311 (TKSH…SDST). Residues 244-261 (TKSHSLEGSSKSNINGTK) show a composition bias toward polar residues. Positions 262–271 (SEGRMDDHHQ) are enriched in basic and acidic residues. Residues 272–285 (SHLSKHSKRSKSKE) are compositionally biased toward basic residues. Phosphoserine occurs at positions 302, 308, 390, and 456. Disordered stretches follow at residues 446–466 (GDEESGESDSSPKTSPTVALR) and 632–669 (VTAQSSTESTQDAYQDSRAQRMSPWPQDSRGGLYNSMD). Positions 632-645 (VTAQSSTESTQDAY) are enriched in polar residues. Phosphoserine is present on residues S667, S670, S673, and S720. Residues 723–756 (VQDSEFPDHQPYPRSDVETATDSDTESRGLREYH) form a disordered region. A Phosphothreonine modification is found at T743. S745 carries the phosphoserine modification. Over residues 747 to 756 (TESRGLREYH) the composition is skewed to basic and acidic residues. Residues S776, S811, S983, and S1012 each carry the phosphoserine modification. The tract at residues 985–1024 (ERKEERKIPPPIPKKPPKGKFPITREKSLDLPDRQRQEAR) is disordered. Positions 1007 to 1024 (ITREKSLDLPDRQRQEAR) are enriched in basic and acidic residues.

This sequence belongs to the SAPAP family. Interacts with DLG4/PSD-95. As to expression, expressed in various brain areas.

The protein localises to the cell membrane. It localises to the postsynaptic density. The protein resides in the synapse. Its function is as follows. May play a role in the molecular organization of synapses and neuronal cell signaling. Could be an adapter protein linking ion channel to the subsynaptic cytoskeleton. May induce enrichment of PSD-95/SAP90 at the plasma membrane. This is Disks large-associated protein 2 from Rattus norvegicus (Rat).